A 105-amino-acid polypeptide reads, in one-letter code: Ig lambda chain C region (105 aa).

The 95-residue stretch at 6–100 (PSVILFPPSS…EGHTVEKSLA (95 aa)) folds into the Ig-like domain. Residues C27 and C86 are joined by a disulfide bond.

This chain is Ig lambda chain C region, found in Oryctolagus cuniculus (Rabbit).